Consider the following 696-residue polypeptide: F-box/LRR-repeat protein 5 (696 aa).

The hemerythrin-like stretch occupies residues 1–159 (MAPFPDEVDV…IKKQVIAQHS (159 aa)). Fe(3+)-binding residues include His15, His57, Glu58, Glu61, His80, His126, and Glu130. In terms of domain architecture, F-box spans 205–251 (STHISQLPTEILLCLFRYLGPEDLCHCGQVCSAWSDLAKTGSLWRHL). LRR repeat units lie at residues 343-367 (SSTV…LDLT), 368-395 (QTDV…DLSG), 396-421 (CEKL…TCSE), 582-612 (CSSG…SLSG), 613-640 (CYQV…NLSG), and 641-666 (CLLI…HFYY). Cys667, Cys681, Cys691, and Cys692 together coordinate [2Fe-2S] cluster.

Part of a SCF (SKP1-cullin-F-box) protein ligase complex. [2Fe-2S] cluster serves as cofactor. Post-translationally, ubiquitinated upon iron and oxygen depletion, leading to its degradation by the proteasome. Ubiquitination is regulated by the hemerythrin-like region that acts as an oxygen and iron sensor.

It is found in the cytoplasm. The protein localises to the perinuclear region. It localises to the nucleus. It participates in protein modification; protein ubiquitination. Its function is as follows. Component of some SCF (SKP1-cullin-F-box) protein ligase complex that plays a central role in iron homeostasis by promoting the ubiquitination and subsequent degradation of ireb2/irp2. Upon high iron and oxygen level, it specifically recognizes and binds ireb2/irp2, promoting its ubiquitination and degradation by the proteasome. The chain is F-box/LRR-repeat protein 5 (fbxl5) from Salmo salar (Atlantic salmon).